The following is a 721-amino-acid chain: Zinc-transporting ATPase (721 aa).

Topologically, residues 1 to 107 are cytoplasmic; it reads MTQSSPLKTQ…HSHGAGEFNL (107 aa). The HMA domain maps to 8-74; sequence KTQQMQVGGM…RIAALGYTLA (67 aa). Positions 19 and 22 each coordinate Zn(2+). Residues 80-101 are disordered; the sequence is VTLNGHKHPHSHREEGHSHSHG. A helical membrane pass occupies residues 108–128; that stretch reads KQELLPVLTAIALFTIAILFE. Topologically, residues 129–140 are extracellular; that stretch reads QPLHNTPGQIAE. A helical transmembrane segment spans residues 141-160; sequence FAVIIPAYLLSGWTVLKTAG. Residues 161 to 167 lie on the Cytoplasmic side of the membrane; sequence RNILRGQ. The helical transmembrane segment at 168–187 threads the bilayer; the sequence is IFDENFLMTIATLGALAIHQ. Residues 188–190 lie on the Extracellular side of the membrane; sequence LPE. The chain crosses the membrane as a helical span at residues 191–210; that stretch reads AVAVMLFFRVGELFQEYSVG. Residues 211–344 are Cytoplasmic-facing; that stretch reads RSRRSIKALL…ITQFARYYTP (134 aa). The helical transmembrane segment at 345-363 threads the bilayer; the sequence is VIVFLSLAVALLPPLFIPG. Residues 364–369 are Extracellular-facing; that stretch reads ADRADW. A helical membrane pass occupies residues 370–387; the sequence is VYRALVLLVISCPCGLVI. The Cytoplasmic segment spans residues 388–671; sequence SIPLGYFGGI…AIHVARKTRQ (284 aa). Aspartate 425 (4-aspartylphosphate intermediate) is an active-site residue. Mg(2+) contacts are provided by aspartate 618 and aspartate 622. The chain crosses the membrane as a helical span at residues 672–693; that stretch reads IVVQNIVLALGIKALFIALGTI. Residues 694 to 701 are Extracellular-facing; the sequence is GLATLWEA. A helical membrane pass occupies residues 702–717; the sequence is VFADVGVALLAILNAT. Residues 718–721 lie on the Cytoplasmic side of the membrane; the sequence is RIAK.

It belongs to the cation transport ATPase (P-type) (TC 3.A.3) family. Type IB subfamily.

The protein resides in the cell membrane. The enzyme catalyses Zn(2+)(in) + ATP + H2O = Zn(2+)(out) + ADP + phosphate + H(+). This is Zinc-transporting ATPase (ziaA) from Synechocystis sp. (strain ATCC 27184 / PCC 6803 / Kazusa).